Reading from the N-terminus, the 312-residue chain is DNA-directed RNA polymerase subunit alpha (312 aa).

Residues 1–226 (MIEFEKPIIT…EHLNLFTDLT (226 aa)) are alpha N-terminal domain (alpha-NTD). The interval 243-312 (DEKVLDRTIE…DLGLGLKNDK (70 aa)) is alpha C-terminal domain (alpha-CTD).

The protein belongs to the RNA polymerase alpha chain family. Homodimer. The RNAP catalytic core consists of 2 alpha, 1 beta, 1 beta' and 1 omega subunit. When a sigma factor is associated with the core the holoenzyme is formed, which can initiate transcription.

It catalyses the reaction RNA(n) + a ribonucleoside 5'-triphosphate = RNA(n+1) + diphosphate. DNA-dependent RNA polymerase catalyzes the transcription of DNA into RNA using the four ribonucleoside triphosphates as substrates. In Streptococcus agalactiae serotype III (strain NEM316), this protein is DNA-directed RNA polymerase subunit alpha.